Reading from the N-terminus, the 454-residue chain is MRGHYHFIGIGGIGMSGLARILLQQNLSVSGSDIAFNYTIEGLIKSGATIYKGHSPSYITSGSTVIYSSDIKTDNPEYLAAKNLQCSLLHRAELLALLTRQKKSLAVTGTHGKTTTSSLLATTLLEANCDSSFAVGGIIPQFQSNAKHGLGDLFVFEADESDRSFLKYFPYGAIVTNIDNDHLNSYENSEDVLIQSFQQFTSQISSPNHLFWCGDDTHLKFLNGIGQSYGFGEHCNWRISNVFQKDFNLEFDLEGNEKKYPSIKLNLIGRHNLLNGAAVFGLAMSLNISEASIRHTFERFCGVLRRCEYKGEFENTIFLDDYAHHPTEIQTTLEGIRKAIKSKRLIAVFQPHRFSRIKDCLGMYGKIFNNADEVFVTDVYGAGETPIEGISQQQIIQEISENSSVPVKYVPRTALGHKLSEFIQPLDVIVTLGAGDVTKVASETLSLLENGKRF.

109-115 provides a ligand contact to ATP; sequence GTHGKTT.

It belongs to the MurCDEF family.

The protein localises to the cytoplasm. The enzyme catalyses UDP-N-acetyl-alpha-D-muramate + L-alanine + ATP = UDP-N-acetyl-alpha-D-muramoyl-L-alanine + ADP + phosphate + H(+). It participates in cell wall biogenesis; peptidoglycan biosynthesis. Its function is as follows. Cell wall formation. The sequence is that of UDP-N-acetylmuramate--L-alanine ligase from Protochlamydia amoebophila (strain UWE25).